A 154-amino-acid chain; its full sequence is Myoglobin (154 aa).

The region spanning 2–148 is the Globin domain; sequence GLSDGEWQLV…FRKDMASNYK (147 aa). Position 4 is a phosphoserine (Ser4). Residue His65 coordinates nitrite. An O2-binding site is contributed by His65. A Phosphothreonine modification is found at Thr68. Position 94 (His94) interacts with heme b.

Belongs to the globin family. In terms of assembly, monomeric.

It localises to the cytoplasm. The protein localises to the sarcoplasm. It carries out the reaction Fe(III)-heme b-[protein] + nitric oxide + H2O = Fe(II)-heme b-[protein] + nitrite + 2 H(+). The enzyme catalyses H2O2 + AH2 = A + 2 H2O. In terms of biological role, monomeric heme protein which primary function is to store oxygen and facilitate its diffusion within muscle tissues. Reversibly binds oxygen through a pentacoordinated heme iron and enables its timely and efficient release as needed during periods of heightened demand. Depending on the oxidative conditions of tissues and cells, and in addition to its ability to bind oxygen, it also has a nitrite reductase activity whereby it regulates the production of bioactive nitric oxide. Under stress conditions, like hypoxia and anoxia, it also protects cells against reactive oxygen species thanks to its pseudoperoxidase activity. The protein is Myoglobin (MB) of Gorilla gorilla beringei (Mountain gorilla).